A 461-amino-acid polypeptide reads, in one-letter code: ATP synthase subunit beta (461 aa).

G151–T158 serves as a coordination point for ATP.

This sequence belongs to the ATPase alpha/beta chains family. F-type ATPases have 2 components, CF(1) - the catalytic core - and CF(0) - the membrane proton channel. CF(1) has five subunits: alpha(3), beta(3), gamma(1), delta(1), epsilon(1). CF(0) has three main subunits: a(1), b(2) and c(9-12). The alpha and beta chains form an alternating ring which encloses part of the gamma chain. CF(1) is attached to CF(0) by a central stalk formed by the gamma and epsilon chains, while a peripheral stalk is formed by the delta and b chains.

Its subcellular location is the cell inner membrane. The catalysed reaction is ATP + H2O + 4 H(+)(in) = ADP + phosphate + 5 H(+)(out). Functionally, produces ATP from ADP in the presence of a proton gradient across the membrane. The catalytic sites are hosted primarily by the beta subunits. The polypeptide is ATP synthase subunit beta (Coxiella burnetii (strain RSA 331 / Henzerling II)).